We begin with the raw amino-acid sequence, 233 residues long: Large ribosomal subunit protein uL1 (233 aa).

Belongs to the universal ribosomal protein uL1 family. Part of the 50S ribosomal subunit.

Its function is as follows. Binds directly to 23S rRNA. The L1 stalk is quite mobile in the ribosome, and is involved in E site tRNA release. In terms of biological role, protein L1 is also a translational repressor protein, it controls the translation of the L11 operon by binding to its mRNA. The chain is Large ribosomal subunit protein uL1 from Shewanella sp. (strain ANA-3).